Here is a 124-residue protein sequence, read N- to C-terminus: Large ribosomal subunit protein bL20c (124 aa).

Belongs to the bacterial ribosomal protein bL20 family.

Its subcellular location is the plastid. The protein resides in the chloroplast. Binds directly to 23S ribosomal RNA and is necessary for the in vitro assembly process of the 50S ribosomal subunit. It is not involved in the protein synthesizing functions of that subunit. The chain is Large ribosomal subunit protein bL20c (rpl20) from Euglena gracilis.